Here is a 229-residue protein sequence, read N- to C-terminus: Urease accessory protein UreF (229 aa).

The protein belongs to the UreF family. UreD, UreF and UreG form a complex that acts as a GTP-hydrolysis-dependent molecular chaperone, activating the urease apoprotein by helping to assemble the nickel containing metallocenter of UreC. The UreE protein probably delivers the nickel.

It localises to the cytoplasm. Its function is as follows. Required for maturation of urease via the functional incorporation of the urease nickel metallocenter. This Staphylococcus aureus (strain bovine RF122 / ET3-1) protein is Urease accessory protein UreF.